We begin with the raw amino-acid sequence, 553 residues long: Capsid protein VP1 (553 aa).

Belongs to the microviridae F protein family.

The protein localises to the virion. Its subcellular location is the host cytoplasm. Functionally, assembles to form an icosahedral capsid with a T=1 symmetry. The polypeptide is Capsid protein VP1 (Spiroplasma virus 4 (SpV4)).